Reading from the N-terminus, the 229-residue chain is Urease accessory protein UreF (229 aa).

The protein belongs to the UreF family. UreD, UreF and UreG form a complex that acts as a GTP-hydrolysis-dependent molecular chaperone, activating the urease apoprotein by helping to assemble the nickel containing metallocenter of UreC. The UreE protein probably delivers the nickel.

Its subcellular location is the cytoplasm. In terms of biological role, required for maturation of urease via the functional incorporation of the urease nickel metallocenter. This is Urease accessory protein UreF from Staphylococcus aureus (strain bovine RF122 / ET3-1).